We begin with the raw amino-acid sequence, 39 residues long: Conotoxin Cl14.5 (39 aa).

Residues 1-16 (PVNEAGVERLFRALVG) constitute a propeptide that is removed on maturation. Residue P38 is modified to Proline amide.

Contains 2 disulfide bonds. Expressed by the venom duct.

Its subcellular location is the secreted. In Californiconus californicus (California cone), this protein is Conotoxin Cl14.5.